A 311-amino-acid chain; its full sequence is Methionyl-tRNA formyltransferase (311 aa).

110–113 (SLLP) provides a ligand contact to (6S)-5,6,7,8-tetrahydrofolate.

Belongs to the Fmt family.

It carries out the reaction L-methionyl-tRNA(fMet) + (6R)-10-formyltetrahydrofolate = N-formyl-L-methionyl-tRNA(fMet) + (6S)-5,6,7,8-tetrahydrofolate + H(+). Attaches a formyl group to the free amino group of methionyl-tRNA(fMet). The formyl group appears to play a dual role in the initiator identity of N-formylmethionyl-tRNA by promoting its recognition by IF2 and preventing the misappropriation of this tRNA by the elongation apparatus. The chain is Methionyl-tRNA formyltransferase from Streptococcus pneumoniae (strain Taiwan19F-14).